We begin with the raw amino-acid sequence, 164 residues long: Phosphopantetheine adenylyltransferase (164 aa).

Substrate is bound at residue serine 9. ATP contacts are provided by residues 9 to 10 and histidine 17; that span reads SF. Residues lysine 41, valine 78, and arginine 92 each contribute to the substrate site. ATP-binding positions include 93–95, glutamate 103, and 128–134; these read GLR and VRTITAT.

This sequence belongs to the bacterial CoaD family. In terms of assembly, homohexamer. The cofactor is Mg(2+).

Its subcellular location is the cytoplasm. It carries out the reaction (R)-4'-phosphopantetheine + ATP + H(+) = 3'-dephospho-CoA + diphosphate. It participates in cofactor biosynthesis; coenzyme A biosynthesis; CoA from (R)-pantothenate: step 4/5. Its function is as follows. Reversibly transfers an adenylyl group from ATP to 4'-phosphopantetheine, yielding dephospho-CoA (dPCoA) and pyrophosphate. The polypeptide is Phosphopantetheine adenylyltransferase (Brucella abortus (strain 2308)).